The sequence spans 1429 residues: Alpha-agarase (1429 aa).

Positions 1–26 (MFKTKRSLLNSSIAISFAVLGVQAQA) are cleaved as a signal peptide. CBM6 domains lie at 29–161 (LELQ…FRLT) and 211–345 (FVIQ…LTFT). Disordered regions lie at residues 349–400 (SDGG…DGVS) and 474–495 (NTPA…GEPG). Residues 369-378 (SSDSCPNTPT) show a composition bias toward polar residues. The PA14 domain occupies 490-638 (NGGEPGDSYY…GGTNFVHPSN (149 aa)). Residues 662-793 (IYIQLEDFDE…QWSGDLVRLA (132 aa)) enclose the CBM6 3 domain.

The protein belongs to the glycosyl hydrolase 96 family. Homodimer. Ca(2+) is required as a cofactor.

The enzyme catalyses Endohydrolysis of 1,3-alpha-L-galactosidic linkages in agarose, yielding agarotetraose as the major product.. Alpha-agarase. Does not hydrolyze agarotetraose, agarohexaose, kappa-carrageenan, iota-carrageenan or lambda-carrageenan. This Alteromonas agarilytica protein is Alpha-agarase.